We begin with the raw amino-acid sequence, 195 residues long: Thymidine kinase (195 aa).

ATP is bound by residues 15–22 (GSMFSGKS) and 88–91 (DEVQ). Catalysis depends on Glu89, which acts as the Proton acceptor. The Zn(2+) site is built by Cys145, Cys148, Cys183, and Cys186.

This sequence belongs to the thymidine kinase family. In terms of assembly, homotetramer.

The protein localises to the cytoplasm. It carries out the reaction thymidine + ATP = dTMP + ADP + H(+). This chain is Thymidine kinase, found in Bacillus cereus (strain AH187).